The primary structure comprises 143 residues: Cofilin (143 aa).

Residues 5–137 form the ADF-H domain; that stretch reads GVAVADESLT…AYESVLEKVS (133 aa).

The protein belongs to the actin-binding proteins ADF family.

It localises to the cytoplasm. The protein resides in the cytoskeleton. The protein localises to the nucleus matrix. In terms of biological role, controls reversibly actin polymerization and depolymerization in a pH-sensitive manner. It has the ability to bind G- and F-actin in a 1:1 ratio of cofilin to actin. Binding to F-actin is regulated by tropomyosin. It is the major component of intranuclear and cytoplasmic actin rods. Required for accumulation of actin at the cell division site via depolymerizing actin at the cell ends. In association with myosin II has a role in the assembly of the contractile ring via severing actin filaments. Involved in the maintenance of the contractile ring once formed. In association with profilin and capping protein, has a role in the mitotic reorganization of the actin cytoskeleton. In Eremothecium gossypii (strain ATCC 10895 / CBS 109.51 / FGSC 9923 / NRRL Y-1056) (Yeast), this protein is Cofilin (COF1).